Reading from the N-terminus, the 518-residue chain is Minor capsid protein L2 (518 aa).

The short motif at 1 to 10 (MQASRRTKRD) is the Nuclear localization signal element. A disulfide bridge links cysteine 19 with cysteine 25. A Nuclear localization signal motif is present at residues 509 to 515 (RKKRKRS).

This sequence belongs to the papillomaviridae L2 protein family. As to quaternary structure, interacts with major capsid protein L1. Interacts with E2; this interaction inhibits E2 transcriptional activity but not the DNA replication function E2. Interacts with host GADD45GIP1. Interacts with host HSPA8; this interaction is required for L2 nuclear translocation. Interacts with host importins KPNB2 and KPNB3. Forms a complex with importin alpha2-beta1 heterodimers via interaction with the importin alpha2 adapter. Interacts with host DYNLT1; this interaction is essential for virus intracellular transport during entry. Interacts (via C-terminus) with host retromer subunits VPS35 and VPS29. In terms of processing, highly phosphorylated.

It localises to the virion. The protein localises to the host nucleus. The protein resides in the host early endosome. It is found in the host Golgi apparatus. Minor protein of the capsid that localizes along the inner surface of the virion, within the central cavities beneath the L1 pentamers. Plays a role in capsid stabilization through interaction with the major capsid protein L1. Once the virion enters the host cell, L2 escorts the genomic DNA into the nucleus by promoting escape from the endosomal compartments and traffic through the host Golgi network. Mechanistically, the C-terminus of L2 possesses a cell-penetrating peptide that protudes from the host endosome, interacts with host cytoplasmic retromer cargo and thereby mediates the capsid delivery to the host trans-Golgi network. Plays a role through its interaction with host dynein in the intracellular microtubule-dependent transport of viral capsid toward the nucleus. Mediates the viral genome import into the nucleus through binding to host importins. Once within the nucleus, L2 localizes viral genomes to host PML bodies in order to activate early gene expression for establishment of infection. Later on, promotes late gene expression by interacting with the viral E2 protein and by inhibiting its transcriptional activation functions. During virion assembly, encapsidates the genome by direct interaction with the viral DNA. The chain is Minor capsid protein L2 from Homo sapiens (Human).